Here is a 164-residue protein sequence, read N- to C-terminus: MKFTGKVWKFGDNIDTDAIIPARYLNTFDPQALAAHCMEDADPDFPKKVSAGDIIVAGENFGCGSSREHAPIAIKAAGVSCVIAKSFARIFYRNAFNMGLPIFESAELFDRVDEGQTITVDGDSGVILLEGAQTPLSIQPIPPFMQELIADGGLMKHLARKNRG.

The protein belongs to the LeuD family. LeuD type 2 subfamily. In terms of assembly, heterodimer of LeuC and LeuD.

It carries out the reaction (2R,3S)-3-isopropylmalate = (2S)-2-isopropylmalate. It participates in amino-acid biosynthesis; L-leucine biosynthesis; L-leucine from 3-methyl-2-oxobutanoate: step 2/4. Functionally, catalyzes the isomerization between 2-isopropylmalate and 3-isopropylmalate, via the formation of 2-isopropylmaleate. The sequence is that of 3-isopropylmalate dehydratase small subunit from Syntrophus aciditrophicus (strain SB).